A 124-amino-acid polypeptide reads, in one-letter code: Protein TAR1 (124 aa).

A disordered region spans residues 80 to 124 (KNRTPRHTGFSPSMTSCSKEHRQGTAPKLPSPNYNSGTEGTRFQI). Residues 111-124 (PNYNSGTEGTRFQI) show a composition bias toward polar residues.

The protein resides in the mitochondrion. Functionally, may be involved in mtDNA stability or mitochondrial gene expression regulation at the post-transcriptional level. The chain is Protein TAR1 (TAR1) from Saccharomyces cerevisiae (strain ATCC 204508 / S288c) (Baker's yeast).